The sequence spans 466 residues: 3-isopropylmalate dehydratase large subunit (466 aa).

[4Fe-4S] cluster contacts are provided by Cys347, Cys407, and Cys410.

It belongs to the aconitase/IPM isomerase family. LeuC type 1 subfamily. As to quaternary structure, heterodimer of LeuC and LeuD. The cofactor is [4Fe-4S] cluster.

The enzyme catalyses (2R,3S)-3-isopropylmalate = (2S)-2-isopropylmalate. It participates in amino-acid biosynthesis; L-leucine biosynthesis; L-leucine from 3-methyl-2-oxobutanoate: step 2/4. Its function is as follows. Catalyzes the isomerization between 2-isopropylmalate and 3-isopropylmalate, via the formation of 2-isopropylmaleate. The chain is 3-isopropylmalate dehydratase large subunit from Escherichia coli O17:K52:H18 (strain UMN026 / ExPEC).